The sequence spans 203 residues: Somatotropin (203 aa).

The first 17 residues, 1–17, serve as a signal peptide directing secretion; the sequence is MNRVILLLSVMCVGVSS. Glutamine 18 bears the Pyrrolidone carboxylic acid mark. Intrachain disulfides connect cysteine 68/cysteine 176 and cysteine 193/cysteine 201.

It belongs to the somatotropin/prolactin family.

Its subcellular location is the secreted. Growth hormone plays an important role in growth control and is involved in the regulation of several anabolic processes. Implicated as an osmoregulatory substance important for seawater adaptation. In Verasper variegatus (Spotted flounder), this protein is Somatotropin (gh).